Reading from the N-terminus, the 199-residue chain is Peptidyl-prolyl cis-trans isomerase CYP22 (199 aa).

Residues 35–198 form the PPIase cyclophilin-type domain; it reads FFDVSIGGIP…LAVVITECGE (164 aa).

This sequence belongs to the cyclophilin-type PPIase family. In terms of tissue distribution, ubiquitous.

It catalyses the reaction [protein]-peptidylproline (omega=180) = [protein]-peptidylproline (omega=0). PPIases accelerate the folding of proteins. It catalyzes the cis-trans isomerization of proline imidic peptide bonds in oligopeptides. The chain is Peptidyl-prolyl cis-trans isomerase CYP22 (CYP22) from Arabidopsis thaliana (Mouse-ear cress).